A 652-amino-acid polypeptide reads, in one-letter code: UvrABC system protein C (652 aa).

The 78-residue stretch at 19–96 folds into the GIY-YIG domain; the sequence is KTSGVYLWKD…IKKHKPRYNI (78 aa). The UVR domain maps to 203-238; it reads EDVSGTLKEKMKEAAEKKEFEKAARLRDGIQAVYAL.

This sequence belongs to the UvrC family. Interacts with UvrB in an incision complex.

It localises to the cytoplasm. Functionally, the UvrABC repair system catalyzes the recognition and processing of DNA lesions. UvrC both incises the 5' and 3' sides of the lesion. The N-terminal half is responsible for the 3' incision and the C-terminal half is responsible for the 5' incision. The chain is UvrABC system protein C from Treponema denticola (strain ATCC 35405 / DSM 14222 / CIP 103919 / JCM 8153 / KCTC 15104).